A 212-amino-acid chain; its full sequence is 2',3'-cyclic-nucleotide 3'-phosphodiesterase (212 aa).

His-51 serves as the catalytic Proton donor/acceptor. Position 53 (Thr-53) interacts with substrate. His-146 functions as the Proton donor/acceptor in the catalytic mechanism. Substrate-binding residues include Ser-148 and Tyr-151.

This sequence belongs to the 2H phosphoesterase superfamily. CPD1 family.

The protein localises to the golgi apparatus. It catalyses the reaction a nucleoside 2',3'-cyclic phosphate + H2O = a nucleoside 2'-phosphate + H(+). Its function is as follows. Involved in the metabolism of ADP-ribose 1',2'-cyclic phosphate which is produced as a consequence of tRNA splicing. The sequence is that of 2',3'-cyclic-nucleotide 3'-phosphodiesterase (cpd-7) from Neurospora crassa (strain ATCC 24698 / 74-OR23-1A / CBS 708.71 / DSM 1257 / FGSC 987).